Reading from the N-terminus, the 485-residue chain is Rhamnulokinase (485 aa).

8–12 (ASSGR) contributes to the ATP binding site. Substrate-binding positions include glycine 78 and 231–233 (HDT). Residue aspartate 232 is the Proton acceptor of the active site. Threonine 254 serves as a coordination point for ATP. Asparagine 291 lines the substrate pocket. Glutamine 299 contacts ATP. Cysteine 348 and cysteine 365 are disulfide-bonded. ATP is bound at residue glycine 397. Cysteines 408 and 412 form a disulfide.

This sequence belongs to the rhamnulokinase family. Requires Mg(2+) as cofactor.

It carries out the reaction L-rhamnulose + ATP = L-rhamnulose 1-phosphate + ADP + H(+). Its pathway is carbohydrate degradation; L-rhamnose degradation; glycerone phosphate from L-rhamnose: step 2/3. Its function is as follows. Involved in the catabolism of L-rhamnose (6-deoxy-L-mannose). Catalyzes the transfer of the gamma-phosphate group from ATP to the 1-hydroxyl group of L-rhamnulose to yield L-rhamnulose 1-phosphate. In Yersinia pestis bv. Antiqua (strain Angola), this protein is Rhamnulokinase.